A 28-amino-acid polypeptide reads, in one-letter code: Dermaseptin-1 (28 aa).

The residue at position 28 (Gln-28) is a Glutamine amide.

As to expression, expressed by the skin glands.

It is found in the secreted. Has antimicrobial activity. The sequence is that of Dermaseptin-1 from Phyllomedusa tomopterna (Tiger-striped leaf frog).